A 271-amino-acid polypeptide reads, in one-letter code: Formamidopyrimidine-DNA glycosylase (271 aa).

The active-site Schiff-base intermediate with DNA is the P2. E3 functions as the Proton donor in the catalytic mechanism. K56 serves as the catalytic Proton donor; for beta-elimination activity. DNA-binding residues include H89, R107, and R151. The FPG-type zinc-finger motif lies at 236-270 (MVYARQGQPCRVCATPIKSLRQGQRSTFYCPHCQK). R260 functions as the Proton donor; for delta-elimination activity in the catalytic mechanism.

Belongs to the FPG family. As to quaternary structure, monomer. Zn(2+) serves as cofactor.

The catalysed reaction is Hydrolysis of DNA containing ring-opened 7-methylguanine residues, releasing 2,6-diamino-4-hydroxy-5-(N-methyl)formamidopyrimidine.. It carries out the reaction 2'-deoxyribonucleotide-(2'-deoxyribose 5'-phosphate)-2'-deoxyribonucleotide-DNA = a 3'-end 2'-deoxyribonucleotide-(2,3-dehydro-2,3-deoxyribose 5'-phosphate)-DNA + a 5'-end 5'-phospho-2'-deoxyribonucleoside-DNA + H(+). In terms of biological role, involved in base excision repair of DNA damaged by oxidation or by mutagenic agents. Acts as a DNA glycosylase that recognizes and removes damaged bases. Has a preference for oxidized purines, such as 7,8-dihydro-8-oxoguanine (8-oxoG). Has AP (apurinic/apyrimidinic) lyase activity and introduces nicks in the DNA strand. Cleaves the DNA backbone by beta-delta elimination to generate a single-strand break at the site of the removed base with both 3'- and 5'-phosphates. This Albidiferax ferrireducens (strain ATCC BAA-621 / DSM 15236 / T118) (Rhodoferax ferrireducens) protein is Formamidopyrimidine-DNA glycosylase.